A 309-amino-acid polypeptide reads, in one-letter code: Olfactory receptor 2AP1 (309 aa).

Topologically, residues 1-23 (MKNKTVLTEFILLGLTDVPELQV) are extracellular. N-linked (GlcNAc...) asparagine glycosylation is present at asparagine 3. Residues 24–47 (AVFTFLFLAYLLSILGNLTILILT) form a helical membrane-spanning segment. Over 48 to 55 (LLDSHLQT) the chain is Cytoplasmic. Residues 56-77 (PMYFFLRNFSFLEISFTNIFIP) traverse the membrane as a helical segment. The Extracellular portion of the chain corresponds to 78 to 98 (RVLISITTGNKSISFAGCFTQ). An N-linked (GlcNAc...) asparagine glycan is attached at asparagine 87. Cysteine 95 and cysteine 187 are disulfide-bonded. The helical transmembrane segment at 99 to 118 (YFFAMFLGATEFYLLAAMSY) threads the bilayer. The Cytoplasmic portion of the chain corresponds to 119 to 137 (DRYVAICKPLHYTTIMSSR). Residues 138 to 156 (ICIQLIFCSWLGGLMAIIP) traverse the membrane as a helical segment. Topologically, residues 157-193 (TITLMSQQDFCASNRLNHYFCDYEPLLELSCSDTSLI) are extracellular. The helical transmembrane segment at 194–217 (EKVVFLVASVTLVVTLVLVILSYA) threads the bilayer. The Cytoplasmic segment spans residues 218-234 (FIIKTILKLPSAQQRTK). A helical membrane pass occupies residues 235 to 257 (AFSTCSSHMIVISLSYGSCMFMY). Residues 258–270 (INPSAKEGDTFNK) are Extracellular-facing. Residues 271–290 (GVALLITSVAPLLNPFIYTL) form a helical membrane-spanning segment. Residues 291–309 (RNQQVKQPFKDMVKKLLNL) are Cytoplasmic-facing.

This sequence belongs to the G-protein coupled receptor 1 family.

It localises to the cell membrane. In terms of biological role, odorant receptor. In Homo sapiens (Human), this protein is Olfactory receptor 2AP1 (OR2AP1).